We begin with the raw amino-acid sequence, 925 residues long: Neuronal PAS domain-containing protein 3 (925 aa).

In terms of domain architecture, bHLH spans 58 to 111 (LRKEKSRDAARSRRGKENFEFYELAKLLPLPAAITSQLDKASIIRLTISYLKMR). Residues 60–71 (KEKSRDAARSRR) are DNA-binding. 2 disordered regions span residues 119-138 (PPWN…KGAQ) and 219-257 (LPPG…SPSL). A PAS 1 domain is found at 152-222 (EAHLGSHILQ…EQLGMKLPPG (71 aa)). The segment covering 234–256 (AASSASSSSQSETPEPVETTSPS) has biased composition (low complexity). In terms of domain architecture, PAS 2 spans 324–394 (PPPTINEVRI…HSHLDLLNKG (71 aa)). The region spanning 398–441 (TKYYRWMQKNGGYIWIQSSATIAINAKNANEKNIIWVNYLLSNP) is the PAC domain. Disordered stretches follow at residues 457–555 (PEKA…FGAL), 576–645 (PCES…SSPH), and 664–774 (NESS…GASN). 2 stretches are compositionally biased toward basic and acidic residues: residues 484 to 493 (ENSKSDEKGN) and 529 to 549 (DSRD…KAAE). The segment covering 601 to 622 (KHQKRKRRRKRQKGGSASRRRL) has biased composition (basic residues). Polar residues predominate over residues 680–690 (NESPYSMTKPP). Composition is skewed to gly residues over residues 700–710 (GQGGSIGGGGA) and 760–771 (GGGAGSGGGGPG).

In terms of assembly, efficient DNA binding requires dimerization with another bHLH protein. Interacts with ARNT; forms a heterodimer that binds core DNA sequence 5'-[AG]CGTG-3' within the hypoxia response element (HRE) of target gene promoters. In terms of tissue distribution, detected exclusively in adult brain in inhibitory interneurons.

It localises to the nucleus. Functionally, may play a broad role in neurogenesis. May control regulatory pathways relevant to schizophrenia and to psychotic illness. This chain is Neuronal PAS domain-containing protein 3 (Npas3), found in Mus musculus (Mouse).